Here is a 147-residue protein sequence, read N- to C-terminus: uncharacterized protein (147 aa).

This sequence to M.pneumoniae MPN_465.

This is an uncharacterized protein from Mycoplasma pneumoniae (strain ATCC 29342 / M129 / Subtype 1) (Mycoplasmoides pneumoniae).